The chain runs to 670 residues: Transcription factor vib-1 (670 aa).

Residues 106–341 (TEMVQDLRDD…RSPRNFQARK (236 aa)) constitute a DNA-binding region (NDT80). Polar residues-rich tracts occupy residues 394–438 (FTSA…TTSM) and 553–568 (LGNSSSDISPQSQHHP). 2 disordered regions span residues 394–457 (FTSA…SYTA) and 496–670 (SAPP…WNAT). Residues 592 to 605 (ASAPASAPTSAAPP) show a composition bias toward low complexity. Polar residues predominate over residues 611–631 (PSQSWTSTAGEGQTSSYTNGG).

The protein resides in the nucleus. Its subcellular location is the cytoplasm. Its function is as follows. Transcription factor that acts as a positive regulator of nonrepressible acid phosphatase activity. Is a major regulator of responses to nitrogen and carbon starvation and is essential for the expression of genes involved in vegetative incompatibility (like pin-c, het-6, and tol). Vegetative incompatibility is a non-self-recognition system ubiquitous in filamentous fungi which results in programmed cell death. The sequence is that of Transcription factor vib-1 (vib-1) from Neurospora crassa (strain ATCC 24698 / 74-OR23-1A / CBS 708.71 / DSM 1257 / FGSC 987).